A 456-amino-acid chain; its full sequence is SWI/SNF complex component SNF12 homolog (456 aa).

The SWIB/MDM2 domain occupies 234–310 (HVPQKYKVLG…PQLLREHLSP (77 aa)). The segment at 435-456 (KQTTPNPTPQQISMAPSTPQTP) is disordered.

It belongs to the SMARCD family. As to quaternary structure, part of a SWI-SNF complex.

Its subcellular location is the nucleus. Functionally, involved in transcriptional activation and repression of select genes by chromatin remodeling (alteration of DNA-nucleosome topology). This chain is SWI/SNF complex component SNF12 homolog (snf12-1), found in Dictyostelium discoideum (Social amoeba).